We begin with the raw amino-acid sequence, 123 residues long: Large ribosomal subunit protein bL20 (123 aa).

It belongs to the bacterial ribosomal protein bL20 family.

Its function is as follows. Binds directly to 23S ribosomal RNA and is necessary for the in vitro assembly process of the 50S ribosomal subunit. It is not involved in the protein synthesizing functions of that subunit. The polypeptide is Large ribosomal subunit protein bL20 (Pseudothermotoga lettingae (strain ATCC BAA-301 / DSM 14385 / NBRC 107922 / TMO) (Thermotoga lettingae)).